We begin with the raw amino-acid sequence, 57 residues long: Ribulose bisphosphate carboxylase large chain (57 aa).

A propeptide spanning residues 1–2 (MS) is cleaved from the precursor. N-acetylproline is present on P3. K14 is subject to N6,N6,N6-trimethyllysine.

This sequence belongs to the RuBisCO large chain family. Type I subfamily. As to quaternary structure, heterohexadecamer of 8 large chains and 8 small chains.

The protein resides in the plastid. It localises to the chloroplast. The enzyme catalyses 2 (2R)-3-phosphoglycerate + 2 H(+) = D-ribulose 1,5-bisphosphate + CO2 + H2O. It carries out the reaction D-ribulose 1,5-bisphosphate + O2 = 2-phosphoglycolate + (2R)-3-phosphoglycerate + 2 H(+). In terms of biological role, ruBisCO catalyzes two reactions: the carboxylation of D-ribulose 1,5-bisphosphate, the primary event in carbon dioxide fixation, as well as the oxidative fragmentation of the pentose substrate in the photorespiration process. Both reactions occur simultaneously and in competition at the same active site. This chain is Ribulose bisphosphate carboxylase large chain (rbcL), found in Camellia sinensis (Tea plant).